We begin with the raw amino-acid sequence, 1133 residues long: Error-prone DNA polymerase (1133 aa).

It belongs to the DNA polymerase type-C family. DnaE2 subfamily.

The protein resides in the cytoplasm. The enzyme catalyses DNA(n) + a 2'-deoxyribonucleoside 5'-triphosphate = DNA(n+1) + diphosphate. In terms of biological role, DNA polymerase involved in damage-induced mutagenesis and translesion synthesis (TLS). It is not the major replicative DNA polymerase. The protein is Error-prone DNA polymerase of Anaeromyxobacter sp. (strain K).